Consider the following 327-residue polypeptide: Beta-ketoacyl-[acyl-carrier-protein] synthase III 2 (327 aa).

Active-site residues include Cys114 and His251. Positions 252-256 (SANLR) are ACP-binding. Asn281 is a catalytic residue.

This sequence belongs to the thiolase-like superfamily. FabH family. As to quaternary structure, homodimer.

Its subcellular location is the cytoplasm. The catalysed reaction is malonyl-[ACP] + acetyl-CoA + H(+) = 3-oxobutanoyl-[ACP] + CO2 + CoA. The protein operates within lipid metabolism; fatty acid biosynthesis. Catalyzes the condensation reaction of fatty acid synthesis by the addition to an acyl acceptor of two carbons from malonyl-ACP. Catalyzes the first condensation reaction which initiates fatty acid synthesis and may therefore play a role in governing the total rate of fatty acid production. Possesses both acetoacetyl-ACP synthase and acetyl transacylase activities. Its substrate specificity determines the biosynthesis of branched-chain and/or straight-chain of fatty acids. This chain is Beta-ketoacyl-[acyl-carrier-protein] synthase III 2, found in Bacillus cereus (strain ATCC 14579 / DSM 31 / CCUG 7414 / JCM 2152 / NBRC 15305 / NCIMB 9373 / NCTC 2599 / NRRL B-3711).